A 576-amino-acid chain; its full sequence is Dihydroxy-acid dehydratase (576 aa).

Residue Cys-56 coordinates [2Fe-2S] cluster. Asp-88 contributes to the Mg(2+) binding site. Cys-129 contacts [2Fe-2S] cluster. Residues Asp-130 and Lys-131 each coordinate Mg(2+). Lys-131 bears the N6-carboxylysine mark. Residue Cys-201 participates in [2Fe-2S] cluster binding. Glu-453 is a Mg(2+) binding site. Ser-479 functions as the Proton acceptor in the catalytic mechanism.

This sequence belongs to the IlvD/Edd family. In terms of assembly, homodimer. [2Fe-2S] cluster serves as cofactor. The cofactor is Mg(2+).

It carries out the reaction (2R)-2,3-dihydroxy-3-methylbutanoate = 3-methyl-2-oxobutanoate + H2O. The catalysed reaction is (2R,3R)-2,3-dihydroxy-3-methylpentanoate = (S)-3-methyl-2-oxopentanoate + H2O. The protein operates within amino-acid biosynthesis; L-isoleucine biosynthesis; L-isoleucine from 2-oxobutanoate: step 3/4. It functions in the pathway amino-acid biosynthesis; L-valine biosynthesis; L-valine from pyruvate: step 3/4. Functionally, functions in the biosynthesis of branched-chain amino acids. Catalyzes the dehydration of (2R,3R)-2,3-dihydroxy-3-methylpentanoate (2,3-dihydroxy-3-methylvalerate) into 2-oxo-3-methylpentanoate (2-oxo-3-methylvalerate) and of (2R)-2,3-dihydroxy-3-methylbutanoate (2,3-dihydroxyisovalerate) into 2-oxo-3-methylbutanoate (2-oxoisovalerate), the penultimate precursor to L-isoleucine and L-valine, respectively. This is Dihydroxy-acid dehydratase from Parvibaculum lavamentivorans (strain DS-1 / DSM 13023 / NCIMB 13966).